The sequence spans 467 residues: Light-independent protochlorophyllide reductase subunit N (467 aa).

[4Fe-4S] cluster-binding residues include Cys-22, Cys-47, and Cys-107.

The protein belongs to the BchN/ChlN family. Protochlorophyllide reductase is composed of three subunits; ChlL, ChlN and ChlB. Forms a heterotetramer of two ChlB and two ChlN subunits. Requires [4Fe-4S] cluster as cofactor.

Its subcellular location is the plastid. The protein resides in the chloroplast. It catalyses the reaction chlorophyllide a + oxidized 2[4Fe-4S]-[ferredoxin] + 2 ADP + 2 phosphate = protochlorophyllide a + reduced 2[4Fe-4S]-[ferredoxin] + 2 ATP + 2 H2O. Its pathway is porphyrin-containing compound metabolism; chlorophyll biosynthesis (light-independent). In terms of biological role, component of the dark-operative protochlorophyllide reductase (DPOR) that uses Mg-ATP and reduced ferredoxin to reduce ring D of protochlorophyllide (Pchlide) to form chlorophyllide a (Chlide). This reaction is light-independent. The NB-protein (ChlN-ChlB) is the catalytic component of the complex. This Chara vulgaris (Common stonewort) protein is Light-independent protochlorophyllide reductase subunit N.